The chain runs to 706 residues: Double-strand break repair protein MRE11 (706 aa).

S2 carries the N-acetylserine modification. The residue at position 2 (S2) is a Phosphoserine. Positions 20, 22, and 60 each coordinate Mn(2+). The interaction with NBN stretch occupies residues 87 to 117 (RPVQFEVISDQSVNFGFSKFPWVNYQDGNLN). Position 128 (N128) interacts with Mn(2+). H129 functions as the Proton donor in the catalytic mechanism. Mn(2+) is bound by residues H217, H245, and H247. A Glycyl lysine isopeptide (Lys-Gly) (interchain with G-Cter in SUMO2) cross-link involves residue K255. A Phosphoserine modification is found at S275. K282 is covalently cross-linked (Glycyl lysine isopeptide (Lys-Gly) (interchain with G-Cter in UFM1)). K339 participates in a covalent cross-link: Glycyl lysine isopeptide (Lys-Gly) (interchain with G-Cter in ubiquitin). Residues K384 and K468 each participate in a glycyl lysine isopeptide (Lys-Gly) (interchain with G-Cter in SUMO) cross-link. Residue K481 forms a Glycyl lysine isopeptide (Lys-Gly) (interchain with G-Cter in ubiquitin) linkage. The span at 505–514 (FRESRQRNTN) shows a compositional bias: basic and acidic residues. The tract at residues 505–706 (FRESRQRNTN…SSSCPRRNRR (202 aa)) is disordered. The segment covering 531-541 (RSQSETSTSAF) has biased composition (polar residues). Over residues 569–579 (GRGRGRGRRGA) the composition is skewed to basic residues. Residues R570, R572, R574, R576, R577, R580, R587, R592, and R594 each carry the asymmetric dimethylarginine modification. The GAR signature appears at 570–594 (RGRGRGRRGARGQSSAPRGGSQRGR). Low complexity predominate over residues 580 to 589 (RGQSSAPRGG). Residues 603–617 (RGRSSKATSSTSRNM) show a composition bias toward polar residues. S618, S640, and S648 each carry phosphoserine. The span at 643–653 (IEVDDSDEDDI) shows a compositional bias: acidic residues. Over residues 655-679 (PTNSRADQRWSGTTSSKRMSQSQTA) the composition is skewed to polar residues. The residue at position 671 (K671) is an N6-lactoyllysine. Phosphoserine is present on residues S674, S676, S686, and S699. A compositionally biased stretch (acidic residues) spans 684–694 (FESDEDDDDDP).

This sequence belongs to the MRE11/RAD32 family. In terms of assembly, component of the MRN complex composed of two heterodimers RAD50 and MRE11 associated with a single NBN. The MRN complexes dimerize on DNA to form joined MRN-MRN oligomers required for DNA double-strand break repair. As part of the MRN complex, interacts with MCM9; the interaction recruits the complex to DNA repair sites. Component of the BASC complex, at least composed of BRCA1, MSH2, MSH6, MLH1, ATM, BLM, RAD50, MRE11 and NBN. Found in a complex with TERF2. Interacts with DCLRE1C/Artemis and DCLRE1B/Apollo. Interacts with ATF2. Interacts with EXD2. Interacts with MRNIP. Interacts with SAMHD1; leading to stimulate 3'-5' exonuclease activity. Interacts (when ubiquitinated) with UBQLN4 (via its UBA domain). Interacts with CYREN (via XLF motif). Interacts with GFI1; promoting methylation by PRMT1. Interacts with DYNLL1; inhibiting the activity of MRE11. Interacts with C1QBP and RAD50; interaction takes place in absence of DNA damage to form the MRC (MRE11-RAD50-C1QBP) complex that inhibits the activity of MRE11. Interacts with AGER/RAGE; AGER is recruited to DNA double-strand break sites where it enhances MRE11 endonuclease activity to promote DNA repair. It depends on Mn(2+) as a cofactor. Post-translationally, phosphorylated by ATM at Ser-674 and Ser-676 in response to DNA damage, promoting MRE11 activity: phosphorylation activates MRE11 by preventing the interaction between MRE11 and the C1QBP inhibitor. Phosphorylation at Ser-648 by PLK1 primes for phosphorylation at Ser-686 by CK2, inhibiting recruitment of the MRN complex to DNA damage sites. In terms of processing, asymmetric dimethylation by PRMT1 promotes MRE11 exonuclease activity. Lactylation at Lys-671 by CREBBP/CBP in response to DNA damage promotes DNA binding and MRE11 activity. Post-translationally, acetylated on lysine residues by KAT2A /GCN5. In terms of processing, ubiquitinated following DNA damage. Ubiquitination triggers interaction with UBQLN4, leading to MRE11 removal from chromatin and degradation by the proteasome. Ubiquitinated at Lys-339 and Lys-481 by RNF126 via 'Lys-27'- and 'Lys-29'-linked polyubiquitin chains, promoting the exonuclease activity of MRE11. SUMOylated by PIAS1, stabilizing MRE11 on chromatin during end resection. DeSUMOylated by SENP3 following removal from DNA double-strand breaks (DSBs). Post-translationally, ufmylation at Lys-282 promotes MRE11 activity and is required for activation of the ATM and ATR kinases by the MRN complex.

It localises to the nucleus. It is found in the chromosome. Its subcellular location is the telomere. Its activity is regulated as follows. Interaction with SAMHD1 stimulates the double-strand-specific 3'-5' exonuclease activity. RBBP8/CtIP specifically promotes the endonuclease activity to clear protein-DNA adducts and generate clean double-strand break ends. DYNLL1-binding inhibits the activity of MRE11. MRE11 activity is inhibited by C1QBP: in absence of DNA damage, C1QBP interacts with unphosphorylated MRE11, preventing formation and activity of the MRN complex. In terms of biological role, core component of the MRN complex, which plays a central role in double-strand break (DSB) repair, DNA recombination, maintenance of telomere integrity and meiosis. The MRN complex is involved in the repair of DNA double-strand breaks (DSBs) via homologous recombination (HR), an error-free mechanism which primarily occurs during S and G2 phases. The complex (1) mediates the end resection of damaged DNA, which generates proper single-stranded DNA, a key initial steps in HR, and is (2) required for the recruitment of other repair factors and efficient activation of ATM and ATR upon DNA damage. Within the MRN complex, MRE11 possesses both single-strand endonuclease activity and double-strand-specific 3'-5' exonuclease activity. After DSBs, MRE11 is loaded onto DSBs sites and cleaves DNA by cooperating with RBBP8/CtIP to initiate end resection. MRE11 first endonucleolytically cleaves the 5' strand at DNA DSB ends to prevent non-homologous end joining (NHEJ) and licence HR. It then generates a single-stranded DNA gap via 3' to 5' exonucleolytic degradation to create entry sites for EXO1- and DNA2-mediated 5' to 3' long-range resection, which is required for single-strand invasion and recombination. RBBP8/CtIP specifically promotes the endonuclease activity of MRE11 to clear protein-DNA adducts and generate clean double-strand break ends. MRE11 endonuclease activity is also enhanced by AGER/RAGE. The MRN complex is also required for DNA damage signaling via activation of the ATM and ATR kinases: the nuclease activity of MRE11 is not required to activate ATM and ATR. The MRN complex is also required for the processing of R-loops. The MRN complex is involved in the activation of the cGAS-STING pathway induced by DNA damage during tumorigenesis: the MRN complex acts by displacing CGAS from nucleosome sequestration, thereby activating it. In telomeres the MRN complex may modulate t-loop formation. The chain is Double-strand break repair protein MRE11 from Mus musculus (Mouse).